The primary structure comprises 449 residues: MTTILKHLPVGQRIGIAFSGGLDTSAALLWMRQKGAVPYAYTANLGQPDEDDYDAIPRRAKEYGAENARLIDCRKQLVAEGIAAIQCGAFHNTTGGMTYFNTTPLGRAVTGTMLVAAMKEDGVNIWGDGSTYKGNDIERFYRYGLLTNAELKIYKPWLDTDFIDELGGRQEMSEFMTTSGFDYKMSAEKAYSTDSNMLGATHEAKDLEFLNSSVKIVNPIMGVKFWDENVRIPAEEVTVRFERGHPVALNGQTFSDDVELLLEANRIGGRHGLGMSDQIENRIIEAKSRGIYEAPGMALLHIAYERLVTGIHNEDTIEQYHAHGRQLGRLLYQGRWFDPQALMLRDALQRWVASEITGEVTLELRRGNDYSILNTVSDNLTYKPERLTMEKGESVFSPDDRIGQLTMRNLDITDTREKLFNYVESGLIFSGNAGLPQVANPSLQDKSAK.

ATP-binding positions include 17-25 (AFSGGLDTS) and alanine 43. Tyrosine 99 serves as a coordination point for L-citrulline. ATP contacts are provided by glycine 129 and threonine 131. Threonine 131, asparagine 135, and aspartate 136 together coordinate L-aspartate. Asparagine 135 contacts L-citrulline. Position 136 (aspartate 136) interacts with ATP. Arginine 139 and serine 192 together coordinate L-citrulline. Aspartate 194 contacts ATP. The L-citrulline site is built by threonine 201, glutamate 203, and glutamate 280.

Belongs to the argininosuccinate synthase family. Type 2 subfamily. As to quaternary structure, homotetramer.

Its subcellular location is the cytoplasm. The catalysed reaction is L-citrulline + L-aspartate + ATP = 2-(N(omega)-L-arginino)succinate + AMP + diphosphate + H(+). It participates in amino-acid biosynthesis; L-arginine biosynthesis; L-arginine from L-ornithine and carbamoyl phosphate: step 2/3. This Dickeya dadantii (strain 3937) (Erwinia chrysanthemi (strain 3937)) protein is Argininosuccinate synthase.